A 221-amino-acid polypeptide reads, in one-letter code: Tumor protein p53-inducible nuclear protein 2 (221 aa).

The LIR signature appears at 26 to 41 (VSEEDEVDGWLIIDLQ). Residues 41–68 (QDSYTAPPDPGASPAPAGRPPPAPSLMD) form a disordered region. Over residues 47–64 (PPDPGASPAPAGRPPPAP) the composition is skewed to pro residues. At Ser136 the chain carries Phosphoserine. Residues 177–210 (RQRAERHTLSAKVLQRQNRARESRSRRPKHQGSF) form a disordered region.

Interacts with VMP1, GABARAP, GABARAPL1, GABARAPL2, MAP1LC3A, MAP1LC3B, MAP1LC3C and THRA.

It is found in the cytoplasm. It localises to the cytosol. The protein localises to the nucleus. The protein resides in the PML body. Its subcellular location is the cytoplasmic vesicle. It is found in the autophagosome. Functionally, dual regulator of transcription and autophagy. Positively regulates autophagy and is required for autophagosome formation and processing. May act as a scaffold protein that recruits MAP1LC3A, GABARAP and GABARAPL2 and brings them to the autophagosome membrane by interacting with VMP1 where, in cooperation with the BECN1-PI3-kinase class III complex, they trigger autophagosome development. Acts as a transcriptional activator of THRA. This Mus musculus (Mouse) protein is Tumor protein p53-inducible nuclear protein 2 (Tp53inp2).